We begin with the raw amino-acid sequence, 348 residues long: Isopentenyl-diphosphate delta-isomerase (348 aa).

A substrate-binding site is contributed by 5-6; that stretch reads RK. FMN is bound by residues S61, 62-64, S92, and N120; that span reads SMT. A substrate-binding site is contributed by 92 to 94; it reads SMR. Q159 is a substrate binding site. Residue E160 coordinates Mg(2+). FMN contacts are provided by residues K189, S214, T219, 269-271, and 290-291; these read GLR and AR.

Belongs to the IPP isomerase type 2 family. As to quaternary structure, homooctamer. Dimer of tetramers. Requires FMN as cofactor. It depends on NADPH as a cofactor. Mg(2+) is required as a cofactor.

Its subcellular location is the cytoplasm. The catalysed reaction is isopentenyl diphosphate = dimethylallyl diphosphate. Functionally, involved in the biosynthesis of isoprenoids. Catalyzes the 1,3-allylic rearrangement of the homoallylic substrate isopentenyl (IPP) to its allylic isomer, dimethylallyl diphosphate (DMAPP). This Thermoplasma acidophilum (strain ATCC 25905 / DSM 1728 / JCM 9062 / NBRC 15155 / AMRC-C165) protein is Isopentenyl-diphosphate delta-isomerase.